The chain runs to 143 residues: Large ribosomal subunit protein uL13 (143 aa).

The protein belongs to the universal ribosomal protein uL13 family. In terms of assembly, part of the 50S ribosomal subunit.

Functionally, this protein is one of the early assembly proteins of the 50S ribosomal subunit, although it is not seen to bind rRNA by itself. It is important during the early stages of 50S assembly. The chain is Large ribosomal subunit protein uL13 from Albidiferax ferrireducens (strain ATCC BAA-621 / DSM 15236 / T118) (Rhodoferax ferrireducens).